Consider the following 581-residue polypeptide: Putative carboxypeptidase YOL153C (581 aa).

At 1–29 (MTETHHAPLPDVYPSSKQPTSSTYSKCKK) the chain is on the cytoplasmic side. A Glycyl lysine isopeptide (Lys-Gly) (interchain with G-Cter in ubiquitin) cross-link involves residue Lys-17. A helical; Signal-anchor for type II membrane protein membrane pass occupies residues 30 to 46 (FGLPLIGLLTLLLAYIS). Topologically, residues 47-581 (SFTKPVPNST…IVNVNEYGHD (535 aa)) are extracellular. N-linked (GlcNAc...) asparagine glycosylation is found at Asn-54 and Asn-76. His-170 serves as a coordination point for Zn(2+). Asp-172 is a catalytic residue. Asp-207 lines the Zn(2+) pocket. Glu-241 acts as the Proton acceptor in catalysis. The Zn(2+) site is built by Glu-242 and Asp-270. N-linked (GlcNAc...) asparagine glycosylation is found at Asn-335 and Asn-428. A Zn(2+)-binding site is contributed by His-550.

It belongs to the peptidase M20A family. Zn(2+) is required as a cofactor.

The protein localises to the membrane. The polypeptide is Putative carboxypeptidase YOL153C (Saccharomyces cerevisiae (strain ATCC 204508 / S288c) (Baker's yeast)).